Here is a 139-residue protein sequence, read N- to C-terminus: Large ribosomal subunit protein uL16 (139 aa).

The interval 1–23 (MLQPARTKYRKMHKGRMPGSAHR) is disordered. Basic residues predominate over residues 7–16 (TKYRKMHKGR).

This sequence belongs to the universal ribosomal protein uL16 family. Part of the 50S ribosomal subunit.

In terms of biological role, binds 23S rRNA and is also seen to make contacts with the A and possibly P site tRNAs. In Myxococcus xanthus (strain DK1622), this protein is Large ribosomal subunit protein uL16.